Here is a 228-residue protein sequence, read N- to C-terminus: Casparian strip membrane protein 2 (228 aa).

Residues 1-65 (MSTSDAAATV…FRRADRGSRC (65 aa)) lie on the Cytoplasmic side of the membrane. A helical membrane pass occupies residues 66–86 (VALLDLVLRVAAFGPALAAAI). The Extracellular segment spans residues 87–113 (ATGTSDETLSVFTQFFQFHARFDDFPA). A helical membrane pass occupies residues 114–134 (LLFFMVANAIAAGYLVLSLPF). The Cytoplasmic portion of the chain corresponds to 135–149 (SAVVVLRPQAIGLRH). A helical transmembrane segment spans residues 150–170 (LLLICDLIIAALLTAAAAAAA). Over 171 to 201 (AIVDLAHSGNQRANWVPICMQFHGFCQRTSG) the chain is Extracellular. Residues 202–222 (AVVASFLAVLVLLFLVILAAF) form a helical membrane-spanning segment. Over 223-228 (TIRKRC) the chain is Cytoplasmic.

The protein belongs to the Casparian strip membrane proteins (CASP) family. In terms of assembly, homodimer and heterodimers.

Its subcellular location is the cell membrane. Regulates membrane-cell wall junctions and localized cell wall deposition. Required for establishment of the Casparian strip membrane domain (CSD) and the subsequent formation of Casparian strips, a cell wall modification of the root endodermis that determines an apoplastic barrier between the intraorganismal apoplasm and the extraorganismal apoplasm and prevents lateral diffusion. This is Casparian strip membrane protein 2 from Zea mays (Maize).